Here is a 105-residue protein sequence, read N- to C-terminus: Flagellar transcriptional regulator FlhD (105 aa).

This sequence belongs to the FlhD family. Homodimer; disulfide-linked. Forms a heterohexamer composed of two FlhC and four FlhD subunits. Each FlhC binds a FlhD dimer, forming a heterotrimer, and a hexamer assembles by dimerization of two heterotrimers.

The protein resides in the cytoplasm. In terms of biological role, functions in complex with FlhC as a master transcriptional regulator that regulates transcription of several flagellar and non-flagellar operons by binding to their promoter region. Activates expression of class 2 flagellar genes, including fliA, which is a flagellum-specific sigma factor that turns on the class 3 genes. Also regulates genes whose products function in a variety of physiological pathways. In Nitrosomonas europaea (strain ATCC 19718 / CIP 103999 / KCTC 2705 / NBRC 14298), this protein is Flagellar transcriptional regulator FlhD.